Here is a 734-residue protein sequence, read N- to C-terminus: MATKFPKFSQALAQDPATRRIWYGIATAHDLESHDGMTEENLYQKIFASHFGHLAIIFLWTSGNLFHVAWQGNFQQWVLNPLKVKPIAHAIWDPHFGQSAIKAFTRGGVSYPVNIATSGVYHWWYTVGMRTNEDLYFGALGLLVLSTTLLFAGWLHLQPKFRPGIAWFKNNESRLNHHLSGLFGVSSLAWSGHLIHVAIPESRGQHIRWNNFTSTLPHPEGLTPFFTGNWGLYAENPDTAQHIFGTSEGAGTAILTFLGGFHPQTQSMWLTDIAHHHLAIAVVFIFAGHMYRTNWGIGHSMKEILDAHVPPKGRLGAGHRGLFETITDSLHMQLGLALASLGVATSLVAQHMYALPSYAFMAKDYVTQAALYTHHQYIAGFLMVGAFAHGAIFFVRDYDPEVNKDNVLARMLQHKEAIISHLSWVSLFLGFHTLGLYIHNDVCVAFGTPEKQILFEPVFAQFIQAASGKALYGFDVLLSSSTSAASVASSKIWLPGWMEAINSGKNSLFLTIGPGDFLVHHAIALGLHTTTLILVKGALDARGSKLMPDKKDFGYSFPCDGPGRGGTCDISAWDAFYLAMFWMLNTISWVTFYWHWKHLTVWGGNAAAFNESSTYIMGWLRDYLWLNSSPLINGYNAFGMNAQAVWAWMFLFGHLIWATGFMFLISWRGYWQELIETLVWAHERTPIANLVKWRDKPVALSIVQARLVGLAHFTVGFIFTFAPFVIASTTGKFA.

The next 8 helical transmembrane spans lie at 46 to 69, 135 to 158, 175 to 199, 273 to 291, 330 to 353, 369 to 395, 417 to 439, and 517 to 535; these read IFASHFGHLAIIFLWTSGNLFHVA, LYFGALGLLVLSTTLLFAGWLHLQ, LNHHLSGLFGVSSLAWSGHLIHVAI, IAHHHLAIAVVFIFAGHMY, LHMQLGLALASLGVATSLVAQHMY, AALYTHHQYIAGFLMVGAFAHGAIFFV, AIISHLSWVSLFLGFHTLGLYIH, and FLVHHAIALGLHTTTLILV. Residues Cys559 and Cys568 each coordinate [4Fe-4S] cluster. The next 2 membrane-spanning stretches (helical) occupy residues 575–596 and 643–665; these read AFYLAMFWMLNTISWVTFYWHW and QAVWAWMFLFGHLIWATGFMFLI. Positions 654, 662, and 670 each coordinate chlorophyll a. A phylloquinone-binding site is contributed by Trp671. A helical transmembrane segment spans residues 707–727; the sequence is LVGLAHFTVGFIFTFAPFVIA.

This sequence belongs to the PsaA/PsaB family. As to quaternary structure, the PsaA/B heterodimer binds the P700 chlorophyll special pair and subsequent electron acceptors. PSI consists of a core antenna complex that captures photons, and an electron transfer chain that converts photonic excitation into a charge separation. The eukaryotic PSI reaction center is composed of at least 11 subunits. P700 is a chlorophyll a/chlorophyll a' dimer, A0 is one or more chlorophyll a, A1 is one or both phylloquinones and FX is a shared 4Fe-4S iron-sulfur center. is required as a cofactor.

It localises to the plastid. The protein resides in the chloroplast thylakoid membrane. It carries out the reaction reduced [plastocyanin] + hnu + oxidized [2Fe-2S]-[ferredoxin] = oxidized [plastocyanin] + reduced [2Fe-2S]-[ferredoxin]. In terms of biological role, psaA and PsaB bind P700, the primary electron donor of photosystem I (PSI), as well as the electron acceptors A0, A1 and FX. PSI is a plastocyanin/cytochrome c6-ferredoxin oxidoreductase, converting photonic excitation into a charge separation, which transfers an electron from the donor P700 chlorophyll pair to the spectroscopically characterized acceptors A0, A1, FX, FA and FB in turn. Oxidized P700 is reduced on the lumenal side of the thylakoid membrane by plastocyanin or cytochrome c6. This Emiliania huxleyi (Coccolithophore) protein is Photosystem I P700 chlorophyll a apoprotein A2.